A 133-amino-acid chain; its full sequence is MASKSVVVFLFLALVASSVVAQAPGPAPTISPLPATPTPSQSPRATAPAPSPSANPPPSAPTTAPPVSQPPTESPPAPPTSTSPSGAPGTNVPSGEAGPAQSPLSGSPNAAAVSRVSLVGTFAGVAVIAALLL.

The N-terminal stretch at 1-21 is a signal peptide; the sequence is MASKSVVVFLFLALVASSVVA. Residue glutamine 22 is modified to Pyrrolidone carboxylic acid. The disordered stretch occupies residues 23 to 110; it reads APGPAPTISP…QSPLSGSPNA (88 aa). A compositionally biased stretch (pro residues) spans 25–37; that stretch reads GPAPTISPLPATP. Low complexity predominate over residues 38–48; it reads TPSQSPRATAP. Positions 49–81 are enriched in pro residues; that stretch reads APSPSANPPPSAPTTAPPVSQPPTESPPAPPTS. Asparagine 109 carries GPI-anchor amidated asparagine lipidation. A propeptide spans 110-133 (removed in mature form); that stretch reads AAAVSRVSLVGTFAGVAVIAALLL.

Belongs to the classical AGP family. Post-translationally, O-glycosylated on the hydroxyproline residues. As to expression, expressed at a low level in flowers and siliques.

The protein localises to the cell membrane. In terms of biological role, proteoglycan that seems to be implicated in diverse developmental roles such as differentiation, cell-cell recognition, embryogenesis and programmed cell death. In Arabidopsis thaliana (Mouse-ear cress), this protein is Classical arabinogalactan protein 5 (AGP5).